The sequence spans 434 residues: ATP phosphoribosyltransferase regulatory subunit (434 aa).

The interval 1 to 48 (MYGRGSGAEHSRGSGAEHFWDPRPEASSTVSSSLRPPSGARDLLPREV) is disordered. Positions 27–38 (SSTVSSSLRPPS) are enriched in low complexity.

This sequence belongs to the class-II aminoacyl-tRNA synthetase family. HisZ subfamily. In terms of assembly, heteromultimer composed of HisG and HisZ subunits.

It localises to the cytoplasm. Its pathway is amino-acid biosynthesis; L-histidine biosynthesis; L-histidine from 5-phospho-alpha-D-ribose 1-diphosphate: step 1/9. In terms of biological role, required for the first step of histidine biosynthesis. May allow the feedback regulation of ATP phosphoribosyltransferase activity by histidine. The polypeptide is ATP phosphoribosyltransferase regulatory subunit (Synechococcus sp. (strain JA-2-3B'a(2-13)) (Cyanobacteria bacterium Yellowstone B-Prime)).